The chain runs to 390 residues: Tuftelin (390 aa).

Coiled-coil stretches lie at residues 88–126 (DKMIHEKNINQLKSEVQYIQEARNCLQKLREDISSKLDR) and 162–351 (DTCI…IEKQ). Positions 358–390 (STQARAKTENPGSIRISKPPSPKPMPVIRVVET) are disordered.

Belongs to the tuftelin family. As to quaternary structure, interacts with TFIP11. In terms of tissue distribution, expressed in the epidermis (at protein level). Present in the extracellular enamel and is mainly associated with the crystal component.

Its subcellular location is the secreted. In terms of biological role, involved in the structural organization of the epidermis. Involved in the mineralization and structural organization of enamel. This is Tuftelin (TUFT1) from Homo sapiens (Human).